Consider the following 217-residue polypeptide: MNSLIKSTKFLKKTNIIRSYCTKTNNNNNTNITKNVLSEIEKEKLKRQIIERIIRVDHAGEFGAARIYEGQLAVLANTKEGPLIREMADQEKEHQAKFNQLIYEKRVRPTILSPIWNVAGFGLGYVSALMGKEAAMAVTVAVETVISDHYNDQLRQLNDAGIDDKELKETIKKFRDDELEHMHIGIEHDAELAPLYKPFSELVKVGTKTAIWLSTRV.

2 consecutive repeat copies span residues 49–130 (IIER…SALM) and 131–217 (GKEA…STRV). The 2 X approximate tandem repeats stretch occupies residues 49–217 (IIERIIRVDH…KTAIWLSTRV (169 aa)). Arginine 52 provides a ligand contact to NADH. The Fe cation site is built by glutamate 61, glutamate 91, histidine 94, glutamate 143, glutamate 178, and histidine 181. Arginine 216 provides a ligand contact to NADH.

The protein belongs to the COQ7 family. Component of a multi-subunit COQ enzyme complex. Fe cation serves as cofactor.

The protein resides in the mitochondrion inner membrane. The catalysed reaction is a 5-methoxy-2-methyl-3-(all-trans-polyprenyl)benzoquinone + NADH + O2 = a 3-demethylubiquinone + NAD(+) + H2O. It participates in cofactor biosynthesis; ubiquinone biosynthesis. Functionally, catalyzes the hydroxylation of the 5-methoxy-2-methyl-3-(all-trans-polyprenyl)benzoquinone at the C6 position and participates in the biosynthesis of ubiquinone. Catalyzes the reaction through a substrate-mediated reduction pathway, whereby NADH shuttles electrons to 5-methoxy-2-methyl-3-(all-trans-decaprenyl)benzoquinone, which then transfers the electrons to the two Fe(3+) centers. The binding of 5-methoxy-2-methyl-3-(all-trans-polyprenyl)benzoquinone (DMQn) mediates reduction of the diiron center by nicotinamide adenine dinucleotide (NADH) and initiates oxygen activation for subsequent DMQ hydroxylation. Also has a structural role in the COQ enzyme complex, stabilizing other COQ polypeptides. In Dictyostelium discoideum (Social amoeba), this protein is NADPH-dependent 3-demethoxyubiquinone 3-hydroxylase, mitochondrial.